The chain runs to 409 residues: Spermatogenesis-associated protein 2-like protein (409 aa).

3 disordered regions span residues 233-257 (EDEG…TSEL), 270-299 (LWGA…PQPE), and 313-337 (RPGD…IPEP).

This sequence belongs to the SPATA2 family.

This is Spermatogenesis-associated protein 2-like protein (SPATA2L) from Bos taurus (Bovine).